Reading from the N-terminus, the 584-residue chain is MPVVDVDPDELRYLTGHSEKDDDELKSDLFNLGLEFEGWTEDDEFQLEFAPDRLDRLSVEGVARSLRYHYGDDRGVEIPNTNSADWTIEVEDQPDERPYVTGAIVRGLDMDEAALESLIQLQEKLHATMGRKRAKGAIGVHDLTMLKGDSVTDETGKSITYTSADPDEATFVPLDADAEMTPSEVMASHETGQTYGDLVADFDRVPAIYDAIGLFSFPPVINGRRTEVSVDSRDLFIEMTGTNQWTIDHMCNIVCYALAARGGQVEKVDVSYADDAPGEYAGKTLERPDFSVRTKTVTHDRIESILGVSLDSREVVDYAERAGLDATETESDDGVAYDVEVPPYRVDVIHPLDIIDDIGRALGFNSLEPTYPDVSTVGGRHERSRLEDAARDALVGLGFEDLLNFHMTNEVENFERMNLSTPEAEDGNDADTVGLADPVTIQEPYSEDYTILRTWALPSIMMVLENNTHRSYPQDLAEIGLAAGLDDSENTGVAEHRTVAAALARTDASYEDAKARLQALADAFDKDLETPPTTHPSFIGGRAAEVVLDGESVGVIGEIHPKVLVEHDLELPVAAFEFRLDALA.

One can recognise a B5 domain in the interval 290–369 (FSVRTKTVTH…RALGFNSLEP (80 aa)). The Mg(2+) site is built by Asp-347, Asp-353, Asp-356, and Asp-357.

It belongs to the phenylalanyl-tRNA synthetase beta subunit family. Type 2 subfamily. Tetramer of two alpha and two beta subunits. Requires Mg(2+) as cofactor.

The protein localises to the cytoplasm. The catalysed reaction is tRNA(Phe) + L-phenylalanine + ATP = L-phenylalanyl-tRNA(Phe) + AMP + diphosphate + H(+). The sequence is that of Phenylalanine--tRNA ligase beta subunit from Haloarcula marismortui (strain ATCC 43049 / DSM 3752 / JCM 8966 / VKM B-1809) (Halobacterium marismortui).